A 432-amino-acid chain; its full sequence is Keratin, type I cytoskeletal 17 (432 aa).

Residues 1-24 are disordered; sequence MTTTIRQFTSSSSIKGSSGLGGGS. The head stretch occupies residues 1-83; the sequence is MTTTIRQFTS…GGVDGLLAGG (83 aa). Phosphoserine is present on residues Ser-12 and Ser-13. Residue Lys-15 forms a Glycyl lysine isopeptide (Lys-Gly) (interchain with G-Cter in SUMO1); alternate linkage. Lys-15 participates in a covalent cross-link: Glycyl lysine isopeptide (Lys-Gly) (interchain with G-Cter in SUMO2); alternate. Phosphoserine occurs at positions 25, 32, and 39. At Ser-44 the chain carries Phosphoserine; by RPS6KA1. The coil 1A stretch occupies residues 84-120; the sequence is EKATMQNLNDRLASYLDKVRALEEANTELEVKIRDWY. The region spanning 84 to 395 is the IF rod domain; the sequence is EKATMQNLND…RLLEGEDAHL (312 aa). Thr-110 bears the Phosphothreonine mark. The segment at 121–138 is linker 1; that stretch reads QRQAPGPARDYSQYYRTI. The tract at residues 139–230 is coil 1B; the sequence is EELQNKILTA…NHEEEMNALR (92 aa). Residues 231-250 are linker 12; sequence GQVGGEINVEMDAAPGVDLS. The tract at residues 251–392 is coil 2; that stretch reads RILNEMRDQY…TYRRLLEGED (142 aa). Lys-278 is covalently cross-linked (Glycyl lysine isopeptide (Lys-Gly) (interchain with G-Cter in SUMO2)). A Phosphothreonine modification is found at Thr-279. Ser-323 is modified (phosphoserine). The tract at residues 393–432 is tail; it reads AHLTQYKKEPVTTRQVRTIVEEVQDGKVISSREQVHQTTR. Glycyl lysine isopeptide (Lys-Gly) (interchain with G-Cter in SUMO1); alternate cross-links involve residues Lys-399, Lys-400, and Lys-419. Glycyl lysine isopeptide (Lys-Gly) (interchain with G-Cter in SUMO2); alternate cross-links involve residues Lys-399, Lys-400, and Lys-419.

It belongs to the intermediate filament family. As to quaternary structure, heterodimer of a type I and a type II keratin. KRT17 associates with KRT6 isomers (KRT6A or KRT6B). Interacts with TRADD and SFN. Post-translationally, phosphorylation at Ser-44 occurs in a growth- and stress-dependent fashion in skin keratinocytes, it has no effect on filament organization.

It localises to the cytoplasm. Functionally, type I keratin involved in the formation and maintenance of various skin appendages, specifically in determining shape and orientation of hair. Required for the correct growth of hair follicles, in particular for the persistence of the anagen (growth) state. Modulates the function of TNF-alpha in the specific context of hair cycling. Regulates protein synthesis and epithelial cell growth through binding to the adapter protein SFN and by stimulating Akt/mTOR pathway. Involved in tissue repair. May be a marker of basal cell differentiation in complex epithelia and therefore indicative of a certain type of epithelial 'stem cells'. Acts as a promoter of epithelial proliferation by acting a regulator of immune response in skin: promotes Th1/Th17-dominated immune environment contributing to the development of basaloid skin tumors. May act as an autoantigen in the immunopathogenesis of psoriasis, with certain peptide regions being a major target for autoreactive T-cells and hence causing their proliferation. The protein is Keratin, type I cytoskeletal 17 of Pan troglodytes (Chimpanzee).